The following is a 97-amino-acid chain: MDILKKIEKHREMEERLKWEGTFAEYLEILKEKPWIAQSAHSRVYNMIKDAGIEEINGRKRYKFFNQEIFGLDEALERLVEEYFHPAAKRLDVRKRI.

This is an uncharacterized protein from Geobacillus stearothermophilus (Bacillus stearothermophilus).